The following is a 565-amino-acid chain: Phosphoenolpyruvate-protein phosphotransferase (565 aa).

The Tele-phosphohistidine intermediate role is filled by His191. Arg289 and Arg325 together coordinate phosphoenolpyruvate. Mg(2+) is bound by residues Glu427 and Asp451. Phosphoenolpyruvate is bound by residues 450–451 (ND) and Arg461. The active-site Proton donor is the Cys498.

Belongs to the PEP-utilizing enzyme family. In terms of assembly, homodimer. The cofactor is Mg(2+).

It is found in the cytoplasm. The catalysed reaction is L-histidyl-[protein] + phosphoenolpyruvate = N(pros)-phospho-L-histidyl-[protein] + pyruvate. In terms of biological role, general (non sugar-specific) component of the phosphoenolpyruvate-dependent sugar phosphotransferase system (sugar PTS). This major carbohydrate active-transport system catalyzes the phosphorylation of incoming sugar substrates concomitantly with their translocation across the cell membrane. Enzyme I transfers the phosphoryl group from phosphoenolpyruvate (PEP) to the phosphoryl carrier protein (HPr). The sequence is that of Phosphoenolpyruvate-protein phosphotransferase (ptsI) from Haloferax volcanii (strain ATCC 29605 / DSM 3757 / JCM 8879 / NBRC 14742 / NCIMB 2012 / VKM B-1768 / DS2) (Halobacterium volcanii).